The following is a 347-amino-acid chain: Phosphoribosylformylglycinamidine cyclo-ligase (347 aa).

This sequence belongs to the AIR synthase family.

It localises to the cytoplasm. It catalyses the reaction 2-formamido-N(1)-(5-O-phospho-beta-D-ribosyl)acetamidine + ATP = 5-amino-1-(5-phospho-beta-D-ribosyl)imidazole + ADP + phosphate + H(+). The protein operates within purine metabolism; IMP biosynthesis via de novo pathway; 5-amino-1-(5-phospho-D-ribosyl)imidazole from N(2)-formyl-N(1)-(5-phospho-D-ribosyl)glycinamide: step 2/2. The chain is Phosphoribosylformylglycinamidine cyclo-ligase from Prochlorococcus marinus (strain AS9601).